The following is a 259-amino-acid chain: tRNA (guanine-N(7)-)-methyltransferase (259 aa).

Positions 1 to 36 are disordered; that stretch reads MTFPSHNPPETGHPSAAPDEALPAAEAPVPGDPEAR. Residues 14–29 show a composition bias toward low complexity; the sequence is PSAAPDEALPAAEAPV. S-adenosyl-L-methionine-binding residues include E91, E116, D143, and D166. D166 is a catalytic residue. Substrate-binding positions include K170, D202, and 237–240; that span reads TKFE.

This sequence belongs to the class I-like SAM-binding methyltransferase superfamily. TrmB family.

It catalyses the reaction guanosine(46) in tRNA + S-adenosyl-L-methionine = N(7)-methylguanosine(46) in tRNA + S-adenosyl-L-homocysteine. The protein operates within tRNA modification; N(7)-methylguanine-tRNA biosynthesis. Functionally, catalyzes the formation of N(7)-methylguanine at position 46 (m7G46) in tRNA. This Aromatoleum aromaticum (strain DSM 19018 / LMG 30748 / EbN1) (Azoarcus sp. (strain EbN1)) protein is tRNA (guanine-N(7)-)-methyltransferase.